Reading from the N-terminus, the 249-residue chain is Triosephosphate isomerase (249 aa).

8 to 10 (NWK) serves as a coordination point for substrate. The active-site Electrophile is H95. E166 acts as the Proton acceptor in catalysis. Residues G172, S211, and 232-233 (GG) contribute to the substrate site.

The protein belongs to the triosephosphate isomerase family. In terms of assembly, homodimer.

Its subcellular location is the cytoplasm. The catalysed reaction is D-glyceraldehyde 3-phosphate = dihydroxyacetone phosphate. It participates in carbohydrate biosynthesis; gluconeogenesis. It functions in the pathway carbohydrate degradation; glycolysis; D-glyceraldehyde 3-phosphate from glycerone phosphate: step 1/1. Its function is as follows. Involved in the gluconeogenesis. Catalyzes stereospecifically the conversion of dihydroxyacetone phosphate (DHAP) to D-glyceraldehyde-3-phosphate (G3P). In Granulibacter bethesdensis (strain ATCC BAA-1260 / CGDNIH1), this protein is Triosephosphate isomerase.